We begin with the raw amino-acid sequence, 345 residues long: tRNA-specific 2-thiouridylase MnmA 1 (345 aa).

ATP-binding positions include 9 to 16 (GMSGGIDS) and Leu-35. Cys-96 serves as the catalytic Nucleophile. A disulfide bridge connects residues Cys-96 and Cys-191. Gly-120 is an ATP binding site. The interaction with tRNA stretch occupies residues 138–140 (KDQ). Cys-191 serves as the catalytic Cysteine persulfide intermediate. The segment at 293–294 (RY) is interaction with tRNA.

It belongs to the MnmA/TRMU family.

The protein resides in the cytoplasm. The enzyme catalyses S-sulfanyl-L-cysteinyl-[protein] + uridine(34) in tRNA + AH2 + ATP = 2-thiouridine(34) in tRNA + L-cysteinyl-[protein] + A + AMP + diphosphate + H(+). Its function is as follows. Catalyzes the 2-thiolation of uridine at the wobble position (U34) of tRNA, leading to the formation of s(2)U34. This Aliarcobacter butzleri (strain RM4018) (Arcobacter butzleri) protein is tRNA-specific 2-thiouridylase MnmA 1.